The sequence spans 798 residues: MVIMSEDASVPAPSAAQPRPLRVGFYDIERTLGKGNFAVVKLARHRVTKTQVAIKIIDKTRLDPSNLEKIYREVQIMKLLNHPHIIKLYQVMETKDMLYIVTEFAKNGEMFDHLTSNGHLSESEARKKFWQILSAVEYCHSHHIVHRDLKTENLLLDANMNIKLADFGFGNFYKSGEPLSTWCGSPPYAAPEVFEGKEYEGPHLDIWSLGVVLYVLVCGSLPFDGPNLPTLRQRVLEGRFRIPYFMSEDCETLIRRMLVVDPTKRITISQIKQHKWMQADPSLRQQQSLSFSMQNYNSNLGDYNEQVLGIMQTLGIDRQRTVESLQNSSYNHFAAIYYLLLERLKEYRSSQLSSRPATGRQQRPRSSEISNAEMPQDSLTSETLRSSLLYQQPQSLIQPSLQAEMDCDMNNPLQPVFFPVDPNFNGLFRNRSISPSSLLETTISEEVRQEKELEDEIKAYDHPIRIPSNTSRRHTLAEVTTHFYQHAPPCIVISSSASPTEGTSSDSCLTSSSNDSSVALSSCLAGQVMTGSPATARMTSAFLASQSDAPVLQVQGCMGGASLLPVSFQEGRRASDTSLTQGLKAFRQQLRKNARAKGFLGLNKIKGFARQVCQSSSSRAARSAMSPFQHAQPNTCIYSSSGSSREGRNLLEEVLQQQRMLQLQHHQLLQPACPQTSQTSATNGLPPSDSAGTCKASNSLLLSELQRENSFELAFGGNSQLLQPHFFGVSVSPVSSAAHLLDTHLYISSNVSPVGTTFSQQQSFSAQSPSYDAVTLQHGDCEMEDLTSNQLGKFVLVK.

In terms of domain architecture, Protein kinase spans 26–277 (YDIERTLGKG…ISQIKQHKWM (252 aa)). Residues 32-40 (LGKGNFAVV) and Lys-55 contribute to the ATP site. Residue Asp-148 is the Proton acceptor of the active site. Thr-181 is modified (phosphothreonine). Residue Ser-185 is modified to Phosphoserine. Positions 302-342 (DYNEQVLGIMQTLGIDRQRTVESLQNSSYNHFAAIYYLLLE) constitute a UBA domain. Polar residues predominate over residues 351-361 (QLSSRPATGRQ). Residues 351-382 (QLSSRPATGRQQRPRSSEISNAEMPQDSLTSE) form a disordered region. The residue at position 575 (Ser-575) is a Phosphoserine. Positions 672 to 691 (ACPQTSQTSATNGLPPSDSA) are disordered. Residues 673-685 (CPQTSQTSATNGL) are compositionally biased toward polar residues.

This sequence belongs to the protein kinase superfamily. CAMK Ser/Thr protein kinase family. SNF1 subfamily. Mg(2+) serves as cofactor. In terms of processing, phosphorylated at Thr-181 by STK11/LKB1 in complex with STE20-related adapter-alpha (STRADA) pseudo kinase and CAB39. As to expression, ubiquitously expressed in embryonic tissue.

It localises to the cytoplasm. The enzyme catalyses L-seryl-[protein] + ATP = O-phospho-L-seryl-[protein] + ADP + H(+). It carries out the reaction L-threonyl-[protein] + ATP = O-phospho-L-threonyl-[protein] + ADP + H(+). Its activity is regulated as follows. Activated by phosphorylation on Thr-181. Its function is as follows. Phosphorylates IRS1 in insulin-stimulated adipocytes, potentially modulating the efficiency of insulin signal transduction. Inhibits CREB activity by phosphorylating and repressing the CREB-specific coactivators, CRTC1-3. This chain is Serine/threonine-protein kinase SIK2 (SIK2), found in Gallus gallus (Chicken).